A 185-amino-acid polypeptide reads, in one-letter code: Probable chorismate pyruvate-lyase 1 (185 aa).

The substrate site is built by R68, L106, and E164.

It belongs to the UbiC family.

The protein resides in the cytoplasm. The catalysed reaction is chorismate = 4-hydroxybenzoate + pyruvate. Its pathway is cofactor biosynthesis; ubiquinone biosynthesis. Removes the pyruvyl group from chorismate, with concomitant aromatization of the ring, to provide 4-hydroxybenzoate (4HB) for the ubiquinone pathway. This is Probable chorismate pyruvate-lyase 1 from Pseudomonas entomophila (strain L48).